The primary structure comprises 414 residues: Chromobox protein homolog 6 (414 aa).

In terms of domain architecture, Chromo spans 11 to 69 (FAAESIIKRRIRKGRIEYLVKWKGWAIKYSTWEPEENILDSRLIAAFEQKERERELYGP). Serine 107 bears the Phosphoserine mark. Disordered stretches follow at residues 127 to 152 (HRMS…PISP), 267 to 308 (APFD…VPNW), and 344 to 365 (ALEP…PEMS). The span at 267–287 (APFDAHSSSSSGCPSPTLQSS) shows a compositional bias: low complexity.

As to quaternary structure, component of a PRC1-like complex. Distinct PRC1-like core complexes are composed of a RING1 subunit (RING1B or RING1A), one of the six PCGF proteins (PCGF1-6), one PHC protein (PHC1-3) and one of the CBX proteins (CBX2, CBX4, CBX6, CBX7 or CBX8). Interacts with PCGF1, PCGF2, PCGF3, BMI1, PCGF5, PCGF6, RING1 and RNF2. May interact with H3C15 and H3C1. Interacts (via chromodomain) with single-stranded RNA (ssRNA). In terms of processing, ubiquitinated. Ubiquitination regulates the function of the Polycomb group (PcG) multiprotein PRC1-like complex. Deubiquitinated by USP26. Expressed in mouse embryonic stem cells.

It is found in the nucleus. The protein resides in the chromosome. In terms of biological role, component of a Polycomb group (PcG) multiprotein PRC1-like complex, a complex class required to maintain the transcriptionally repressive state of many genes, including Hox genes, throughout development. PcG PRC1 complex acts via chromatin remodeling and modification of histones; it mediates monoubiquitination of histone H2A 'Lys-119', rendering chromatin heritably changed in its expressibility. Possibly contributes to the target selectivity of the PRC1 complex by binding specific regions of chromatin. Recruitment to chromatin might occur in an H3K27me3-independent fashion. May have a PRC1-independent function in embryonic stem cells. The protein is Chromobox protein homolog 6 (Cbx6) of Mus musculus (Mouse).